Reading from the N-terminus, the 1040-residue chain is Multidrug resistance protein MdtB (1040 aa).

12 helical membrane passes run 25–45 (LLMVAILLAGIIGYQALPVSA), 347–367 (LMMAIALVVMIIYLFLRNIPA), 369–389 (IIPGVAVPLSLIGTFAVMVFL), 396–416 (LTLMALTIATGFVVDDAIVVI), 440–460 (IGFTIISLTFSLIAVLIPLLF), 472–492 (FAITLAVAILISAVVSLTLTP), 537–557 (WLTLSVALSTLLLSVLLWVFI), 863–883 (LGSTVWLIVAAVVAMYIVLGI), 888–908 (FIHPITILSTLPTAGVGALLA), 911–931 (IAGSELDVIAIIGIILLIGIV), 968–988 (ILMTTLAALLGALPLMLSTGV), and 998–1018 (IGMVGGLIVSQVLTLFTTPVI).

It belongs to the resistance-nodulation-cell division (RND) (TC 2.A.6) family. MdtB subfamily. In terms of assembly, part of a tripartite efflux system composed of MdtA, MdtB and MdtC. MdtB forms a heteromultimer with MdtC.

It localises to the cell inner membrane. The MdtABC tripartite complex confers resistance against novobiocin and deoxycholate. In Escherichia coli O127:H6 (strain E2348/69 / EPEC), this protein is Multidrug resistance protein MdtB.